A 264-amino-acid polypeptide reads, in one-letter code: MKQYLELMQKVLDEGTQKNDRTGTGTLSIFGHQMRFNLQEGFPLVTTKRCHLRSIIHELLWFLQGDTNIAYLHENNVTIWDEWADENGDLGPVYGKQWRAWPTPDGRHIDQITTVLNQLKNDPDSRRIIVSAWNVGELDKMALAPCHAFFQFYVADGKLSCQLYQRSCDVFLGLPFNIASYALLVHMMAQQCDLEVGDFVWTGGDTHLYSNHMDQTHLQLSREPRSLPKLIIKRKPESIFDYRFEDFEIEGYDPHPGIKAPVAI.

Arginine 21 is a dUMP binding site. Histidine 51 is a binding site for (6R)-5,10-methylene-5,6,7,8-tetrahydrofolate. Position 126–127 (126–127) interacts with dUMP; the sequence is RR. Cysteine 146 (nucleophile) is an active-site residue. DUMP is bound by residues 166–169, asparagine 177, and 207–209; these read RSCD and HLY. Aspartate 169 contacts (6R)-5,10-methylene-5,6,7,8-tetrahydrofolate. Alanine 263 contributes to the (6R)-5,10-methylene-5,6,7,8-tetrahydrofolate binding site.

This sequence belongs to the thymidylate synthase family. Bacterial-type ThyA subfamily. As to quaternary structure, homodimer.

It localises to the cytoplasm. It carries out the reaction dUMP + (6R)-5,10-methylene-5,6,7,8-tetrahydrofolate = 7,8-dihydrofolate + dTMP. It participates in pyrimidine metabolism; dTTP biosynthesis. Its function is as follows. Catalyzes the reductive methylation of 2'-deoxyuridine-5'-monophosphate (dUMP) to 2'-deoxythymidine-5'-monophosphate (dTMP) while utilizing 5,10-methylenetetrahydrofolate (mTHF) as the methyl donor and reductant in the reaction, yielding dihydrofolate (DHF) as a by-product. This enzymatic reaction provides an intracellular de novo source of dTMP, an essential precursor for DNA biosynthesis. This chain is Thymidylate synthase, found in Escherichia fergusonii (strain ATCC 35469 / DSM 13698 / CCUG 18766 / IAM 14443 / JCM 21226 / LMG 7866 / NBRC 102419 / NCTC 12128 / CDC 0568-73).